Consider the following 353-residue polypeptide: Photosystem II protein D1 (353 aa).

Residue threonine 2 is modified to N-acetylthreonine. Position 2 is a phosphothreonine (threonine 2). 3 consecutive transmembrane segments (helical) span residues 29–46 (YIGW…TATS), 118–133 (HFLL…EWEL), and 142–156 (WIAV…AATA). A chlorophyll a-binding site is contributed by histidine 118. Tyrosine 126 is a pheophytin a binding site. 2 residues coordinate [CaMn4O5] cluster: aspartate 170 and glutamate 189. The helical transmembrane segment at 197–218 (FHMLGVAGVFGGSLFSAMHGSL) threads the bilayer. Chlorophyll a is bound at residue histidine 198. A quinone-binding positions include histidine 215 and 264–265 (SF). Histidine 215 lines the Fe cation pocket. Position 272 (histidine 272) interacts with Fe cation. The chain crosses the membrane as a helical span at residues 274–288 (FLAAWPVVGIWFTAL). Positions 332, 333, 342, and 344 each coordinate [CaMn4O5] cluster. Positions 345–353 (AIDAPSING) are excised as a propeptide.

It belongs to the reaction center PufL/M/PsbA/D family. PSII is composed of 1 copy each of membrane proteins PsbA, PsbB, PsbC, PsbD, PsbE, PsbF, PsbH, PsbI, PsbJ, PsbK, PsbL, PsbM, PsbT, PsbX, PsbY, PsbZ, Psb30/Ycf12, at least 3 peripheral proteins of the oxygen-evolving complex and a large number of cofactors. It forms dimeric complexes. Requires The D1/D2 heterodimer binds P680, chlorophylls that are the primary electron donor of PSII, and subsequent electron acceptors. It shares a non-heme iron and each subunit binds pheophytin, quinone, additional chlorophylls, carotenoids and lipids. D1 provides most of the ligands for the Mn4-Ca-O5 cluster of the oxygen-evolving complex (OEC). There is also a Cl(-1) ion associated with D1 and D2, which is required for oxygen evolution. The PSII complex binds additional chlorophylls, carotenoids and specific lipids. as cofactor. Tyr-161 forms a radical intermediate that is referred to as redox-active TyrZ, YZ or Y-Z. In terms of processing, C-terminally processed by CTPA; processing is essential to allow assembly of the oxygen-evolving complex and thus photosynthetic growth.

Its subcellular location is the plastid. It localises to the chloroplast thylakoid membrane. The catalysed reaction is 2 a plastoquinone + 4 hnu + 2 H2O = 2 a plastoquinol + O2. Photosystem II (PSII) is a light-driven water:plastoquinone oxidoreductase that uses light energy to abstract electrons from H(2)O, generating O(2) and a proton gradient subsequently used for ATP formation. It consists of a core antenna complex that captures photons, and an electron transfer chain that converts photonic excitation into a charge separation. The D1/D2 (PsbA/PsbD) reaction center heterodimer binds P680, the primary electron donor of PSII as well as several subsequent electron acceptors. This Glycine max (Soybean) protein is Photosystem II protein D1.